Here is a 411-residue protein sequence, read N- to C-terminus: MLDLKNLQNNFDEVAKKLKNKKVDENILKKLAELFASLKKEKTALEEFQAFQNKFSKELATAEDKESLKAKLSENKSKINEQSAKVNALENELEEIAHAIPNIPDECVPVGEDEDENVELKKVLNPSSFDFTPKEHFELGESLNWLDFVRGVKISQSRFCVLKNEGALLSRALVNYMIDFNRSRGFEFVNVPFLVNGATMFGTGQLPKFKEDMYKVDDEDLYLISTSEIPVTNLYSGEILASETLPIKMTCYSACFRKEAGSAGRDTRGIIRQHQFEKVELVSITKPEQSDSVFNEMLECASDLLSSLGLAHRHLMLCTGDLGFSAAKTVDLEVWLPGQNKYREISSVSNCRDFQARRAKIRYKNEQGKNELVHTLNGSSLAVGRTLVAIMENYQDKEGKIHIPDVLKKYF.

L-serine is bound at residue 226-228; the sequence is TSE. 257–259 contributes to the ATP binding site; it reads RKE. An L-serine-binding site is contributed by Glu-280. 344–347 contributes to the ATP binding site; the sequence is EISS. Ser-379 is a binding site for L-serine.

It belongs to the class-II aminoacyl-tRNA synthetase family. Type-1 seryl-tRNA synthetase subfamily. Homodimer. The tRNA molecule binds across the dimer.

The protein localises to the cytoplasm. The enzyme catalyses tRNA(Ser) + L-serine + ATP = L-seryl-tRNA(Ser) + AMP + diphosphate + H(+). It carries out the reaction tRNA(Sec) + L-serine + ATP = L-seryl-tRNA(Sec) + AMP + diphosphate + H(+). It functions in the pathway aminoacyl-tRNA biosynthesis; selenocysteinyl-tRNA(Sec) biosynthesis; L-seryl-tRNA(Sec) from L-serine and tRNA(Sec): step 1/1. Functionally, catalyzes the attachment of serine to tRNA(Ser). Is also able to aminoacylate tRNA(Sec) with serine, to form the misacylated tRNA L-seryl-tRNA(Sec), which will be further converted into selenocysteinyl-tRNA(Sec). The protein is Serine--tRNA ligase of Campylobacter jejuni subsp. jejuni serotype O:23/36 (strain 81-176).